Reading from the N-terminus, the 299-residue chain is Oxygen-dependent coproporphyrinogen-III oxidase (299 aa).

Residue Ser-92 coordinates substrate. 2 residues coordinate Mn(2+): His-96 and His-106. His-106 serves as the catalytic Proton donor. 108–110 contacts substrate; that stretch reads NVR. Mn(2+) contacts are provided by His-145 and His-175. Residues 240–275 form an important for dimerization region; the sequence is YVEFNLVWDRGTLFGLQTGGRTESILMSMPPLVRWE. A substrate-binding site is contributed by 258–260; sequence GGR.

Belongs to the aerobic coproporphyrinogen-III oxidase family. Homodimer. Mn(2+) is required as a cofactor.

It localises to the cytoplasm. It catalyses the reaction coproporphyrinogen III + O2 + 2 H(+) = protoporphyrinogen IX + 2 CO2 + 2 H2O. The protein operates within porphyrin-containing compound metabolism; protoporphyrin-IX biosynthesis; protoporphyrinogen-IX from coproporphyrinogen-III (O2 route): step 1/1. Its function is as follows. Involved in the heme biosynthesis. Catalyzes the aerobic oxidative decarboxylation of propionate groups of rings A and B of coproporphyrinogen-III to yield the vinyl groups in protoporphyrinogen-IX. This Escherichia coli O17:K52:H18 (strain UMN026 / ExPEC) protein is Oxygen-dependent coproporphyrinogen-III oxidase.